A 637-amino-acid chain; its full sequence is 1-deoxy-D-xylulose-5-phosphate synthase (637 aa).

Thiamine diphosphate is bound by residues H71 and 112 to 114; that span reads SHA. D144 lines the Mg(2+) pocket. Residues 145–146, N173, Y284, and E365 contribute to the thiamine diphosphate site; that span reads GA. Residue N173 participates in Mg(2+) binding.

It belongs to the transketolase family. DXPS subfamily. As to quaternary structure, homodimer. Mg(2+) is required as a cofactor. Thiamine diphosphate serves as cofactor.

It catalyses the reaction D-glyceraldehyde 3-phosphate + pyruvate + H(+) = 1-deoxy-D-xylulose 5-phosphate + CO2. It participates in metabolic intermediate biosynthesis; 1-deoxy-D-xylulose 5-phosphate biosynthesis; 1-deoxy-D-xylulose 5-phosphate from D-glyceraldehyde 3-phosphate and pyruvate: step 1/1. Functionally, catalyzes the acyloin condensation reaction between C atoms 2 and 3 of pyruvate and glyceraldehyde 3-phosphate to yield 1-deoxy-D-xylulose-5-phosphate (DXP). This is 1-deoxy-D-xylulose-5-phosphate synthase from Mycobacterium ulcerans (strain Agy99).